We begin with the raw amino-acid sequence, 351 residues long: Peptide chain release factor 1 (351 aa).

N5-methylglutamine is present on Q229. A disordered region spans residues 278-297; sequence RVDDERSADRAAQVGSGDRS.

It belongs to the prokaryotic/mitochondrial release factor family. Post-translationally, methylated by PrmC. Methylation increases the termination efficiency of RF1.

It localises to the cytoplasm. Peptide chain release factor 1 directs the termination of translation in response to the peptide chain termination codons UAG and UAA. This chain is Peptide chain release factor 1, found in Roseobacter denitrificans (strain ATCC 33942 / OCh 114) (Erythrobacter sp. (strain OCh 114)).